The sequence spans 178 residues: ATP-dependent protease subunit HslV (178 aa).

The active site involves Thr7. Positions 162, 165, and 168 each coordinate Na(+).

It belongs to the peptidase T1B family. HslV subfamily. In terms of assembly, a double ring-shaped homohexamer of HslV is capped on each side by a ring-shaped HslU homohexamer. The assembly of the HslU/HslV complex is dependent on binding of ATP.

Its subcellular location is the cytoplasm. It carries out the reaction ATP-dependent cleavage of peptide bonds with broad specificity.. With respect to regulation, allosterically activated by HslU binding. Protease subunit of a proteasome-like degradation complex believed to be a general protein degrading machinery. The sequence is that of ATP-dependent protease subunit HslV from Burkholderia orbicola (strain AU 1054).